We begin with the raw amino-acid sequence, 49 residues long: Large ribosomal subunit protein bL33A (49 aa).

The protein belongs to the bacterial ribosomal protein bL33 family.

The protein is Large ribosomal subunit protein bL33A of Latilactobacillus sakei subsp. sakei (strain 23K) (Lactobacillus sakei subsp. sakei).